The following is a 157-amino-acid chain: Succinate dehydrogenase assembly factor 2-A, mitochondrial (157 aa).

The transit peptide at 1–21 directs the protein to the mitochondrion; sequence MLRQVLSSTSVRRLLVSPTRC.

The protein belongs to the SDHAF2 family. In terms of assembly, interacts with the flavoprotein subunit within the SDH catalytic dimer.

It localises to the mitochondrion matrix. In terms of biological role, plays an essential role in the assembly of succinate dehydrogenase (SDH), an enzyme complex (also referred to as respiratory complex II) that is a component of both the tricarboxylic acid (TCA) cycle and the mitochondrial electron transport chain, and which couples the oxidation of succinate to fumarate with the reduction of ubiquinone (coenzyme Q) to ubiquinol. Required for flavinylation (covalent attachment of FAD) of the flavoprotein subunit of the SDH catalytic dimer. This Drosophila mojavensis (Fruit fly) protein is Succinate dehydrogenase assembly factor 2-A, mitochondrial.